The primary structure comprises 339 residues: GTPase Era (339 aa).

One can recognise an RPE1 insert domain in the interval 4–48; the sequence is RHLAKFAYREEFKGDTEALAAAVREDASTGSTSQLPLEVQFGKMS. One can recognise an Era-type G domain in the interval 51 to 220; that stretch reads KTVSVCIIGR…ITSKAKISPW (170 aa). Residues 59-66 are G1; the sequence is GRPNSGKS. 59–66 contacts GTP; the sequence is GRPNSGKS. Residues 85 to 89 are G2; it reads QTTRS. Residues 106–109 are G3; it reads DTPG. Residues 106–110 and 168–171 contribute to the GTP site; these read DTPGI and NKID. Positions 168 to 171 are G4; the sequence is NKID. The segment at 196-198 is G5; that stretch reads ISA. The region spanning 248–325 is the KH type-2 domain; it reads LQKELPYKLT…HLFLFVKVRE (78 aa).

It belongs to the TRAFAC class TrmE-Era-EngA-EngB-Septin-like GTPase superfamily. Era GTPase family. In terms of assembly, monomer.

The protein localises to the cytoplasm. The protein resides in the cell inner membrane. An essential GTPase that binds both GDP and GTP, with rapid nucleotide exchange. Plays a role in 16S rRNA processing and 30S ribosomal subunit biogenesis and possibly also in cell cycle regulation and energy metabolism. This chain is GTPase Era, found in Rickettsia conorii (strain ATCC VR-613 / Malish 7).